The sequence spans 185 residues: uncharacterized protein (185 aa).

Residues 1 to 69 lie on the Cytoplasmic side of the membrane; sequence MSSFIDSIKS…SSDCSRAERT (69 aa). A helical membrane pass occupies residues 70-90; that stretch reads FNLILFAIVDLVICCESMAFF. Asparagine 91 is a topological domain (extracellular). A helical transmembrane segment spans residues 92–112; it reads LLLKLPSMLLVSFLTMLVFSI. At 113–118 the chain is on the cytoplasmic side; that stretch reads SYSWSA. The chain crosses the membrane as a helical span at residues 119-139; sequence FNWISFAFSSASFLMKACILF. The Extracellular segment spans residues 140–185; sequence NSSFTWFGVKAVIAEDMLYRMVRGLFCASFVKQLQTTFLATAIVLC.

It localises to the membrane. This is an uncharacterized protein from Saccharomyces cerevisiae (strain ATCC 204508 / S288c) (Baker's yeast).